Consider the following 469-residue polypeptide: Aspartyl/glutamyl-tRNA(Asn/Gln) amidotransferase subunit B (469 aa).

The protein belongs to the GatB/GatE family. GatB subfamily. Heterotrimer of A, B and C subunits.

The catalysed reaction is L-glutamyl-tRNA(Gln) + L-glutamine + ATP + H2O = L-glutaminyl-tRNA(Gln) + L-glutamate + ADP + phosphate + H(+). It carries out the reaction L-aspartyl-tRNA(Asn) + L-glutamine + ATP + H2O = L-asparaginyl-tRNA(Asn) + L-glutamate + ADP + phosphate + 2 H(+). Its function is as follows. Allows the formation of correctly charged Asn-tRNA(Asn) or Gln-tRNA(Gln) through the transamidation of misacylated Asp-tRNA(Asn) or Glu-tRNA(Gln) in organisms which lack either or both of asparaginyl-tRNA or glutaminyl-tRNA synthetases. The reaction takes place in the presence of glutamine and ATP through an activated phospho-Asp-tRNA(Asn) or phospho-Glu-tRNA(Gln). The protein is Aspartyl/glutamyl-tRNA(Asn/Gln) amidotransferase subunit B of Thermus thermophilus (strain ATCC 27634 / DSM 579 / HB8).